Reading from the N-terminus, the 190-residue chain is Threonylcarbamoyl-AMP synthase (190 aa).

Residues 7 to 190 form the YrdC-like domain; sequence NFVLADIVRA…ALTGKRFRQG (184 aa).

This sequence belongs to the SUA5 family. TsaC subfamily.

The protein localises to the cytoplasm. It carries out the reaction L-threonine + hydrogencarbonate + ATP = L-threonylcarbamoyladenylate + diphosphate + H2O. Required for the formation of a threonylcarbamoyl group on adenosine at position 37 (t(6)A37) in tRNAs that read codons beginning with adenine. Catalyzes the conversion of L-threonine, HCO(3)(-)/CO(2) and ATP to give threonylcarbamoyl-AMP (TC-AMP) as the acyladenylate intermediate, with the release of diphosphate. This Yersinia pestis bv. Antiqua (strain Angola) protein is Threonylcarbamoyl-AMP synthase.